The primary structure comprises 550 residues: ATP-dependent RNA helicase MSS116, mitochondrial (550 aa).

Over residues 1–11 the composition is skewed to basic residues; that stretch reads MPPPPKRKWPN. The transit peptide at 1–41 directs the protein to the mitochondrion; it reads MPPPPKRKWPNRPRGGGGANGSASGTPTTPRSTVAQQPKRP. The segment at 1–51 is disordered; it reads MPPPPKRKWPNRPRGGGGANGSASGTPTTPRSTVAQQPKRPKVEDAAPAAE. Residues 71-99 carry the Q motif motif; sequence FSELSSVLDKSLLDGLDKMGFEFMSPVQQ. The region spanning 103-285 is the Helicase ATP-binding domain; the sequence is TELPSLSSDC…KIVLFPGFTH (183 aa). 116-123 contributes to the ATP binding site; sequence AKTGTGKT. A DEAD box motif is present at residues 230 to 233; sequence DEAD. One can recognise a Helicase C-terminal domain in the interval 316–472; that stretch reads ALSALIQEEH…KVPEQEAAIT (157 aa).

This sequence belongs to the DEAD box helicase family. DDX18/HAS1 subfamily.

The protein localises to the mitochondrion matrix. The enzyme catalyses ATP + H2O = ADP + phosphate + H(+). In terms of biological role, ATP-dependent RNA helicase required for mitochondrial splicing of group I and II introns. Also required for efficient mitochondrial translation. In Phaeosphaeria nodorum (strain SN15 / ATCC MYA-4574 / FGSC 10173) (Glume blotch fungus), this protein is ATP-dependent RNA helicase MSS116, mitochondrial (MSS116).